A 156-amino-acid chain; its full sequence is ATP synthase subunit b (156 aa).

Residues 7–27 (LFVQAIVFAILVWFTMKFVWP) form a helical membrane-spanning segment.

Belongs to the ATPase B chain family. As to quaternary structure, F-type ATPases have 2 components, F(1) - the catalytic core - and F(0) - the membrane proton channel. F(1) has five subunits: alpha(3), beta(3), gamma(1), delta(1), epsilon(1). F(0) has three main subunits: a(1), b(2) and c(10-14). The alpha and beta chains form an alternating ring which encloses part of the gamma chain. F(1) is attached to F(0) by a central stalk formed by the gamma and epsilon chains, while a peripheral stalk is formed by the delta and b chains.

Its subcellular location is the cell inner membrane. Functionally, f(1)F(0) ATP synthase produces ATP from ADP in the presence of a proton or sodium gradient. F-type ATPases consist of two structural domains, F(1) containing the extramembraneous catalytic core and F(0) containing the membrane proton channel, linked together by a central stalk and a peripheral stalk. During catalysis, ATP synthesis in the catalytic domain of F(1) is coupled via a rotary mechanism of the central stalk subunits to proton translocation. Its function is as follows. Component of the F(0) channel, it forms part of the peripheral stalk, linking F(1) to F(0). The sequence is that of ATP synthase subunit b from Polaromonas sp. (strain JS666 / ATCC BAA-500).